A 1010-amino-acid polypeptide reads, in one-letter code: Sodium/potassium-transporting ATPase subunit alpha-3 (1010 aa).

The tract at residues 1–21 (MGDKGEKESPKKGKGKRDLDD) is disordered. Residues 1–74 (MGDKGEKESP…NALTPPPTTP (74 aa)) lie on the Cytoplasmic side of the membrane. The segment at 69-71 (PPP) is interaction with phosphoinositide-3 kinase. Residues 75–95 (EWVKFCRQLFGGFSILLWIGA) traverse the membrane as a helical segment. Topologically, residues 96 to 118 (ILCFLAYGIQAGTEDEPSNDNLY) are extracellular. Residues 119–139 (LGIVLAAVVIITGCFSYYQEA) traverse the membrane as a helical segment. Residues 140 to 275 (KSSKIMESFK…VGKTPIAVEI (136 aa)) lie on the Cytoplasmic side of the membrane. The chain crosses the membrane as a helical span at residues 276–295 (EHFIQLITGVAVFLGISFFV). Residues 296–307 (LSLILGYTWLEA) lie on the Extracellular side of the membrane. The helical transmembrane segment at 308-325 (VIFLIGIIVANVPEGLLA) threads the bilayer. The Cytoplasmic segment spans residues 326–759 (TVTVCLTLTA…EEGRLIFDNL (434 aa)). The active-site 4-aspartylphosphate intermediate is Asp363. Residues Asp704 and Asp708 each coordinate Mg(2+). Residues 760–779 (KKSIAYTLTSNIPEITPFLL) form a helical membrane-spanning segment. Residues 780–789 (FIMANIPLPL) lie on the Extracellular side of the membrane. A helical membrane pass occupies residues 790–810 (GTITILCIDLGTDMVPAISLA). The Cytoplasmic segment spans residues 811–830 (YEAAESDIMKRQPRNPRSDK). Residues 831 to 853 (LVNERLISMAYGQIGMIQALGGF) form a helical membrane-spanning segment. Residues 854-905 (FSYFVILAENGFLPSCLVGIRLSWDDRTINDLEDSYGQQWTYEQRKVVEFTC) are Extracellular-facing. Residues 906 to 925 (HTAFFVSIVVVQWADLIICK) form a helical membrane-spanning segment. At 926 to 938 (TRRNSVFQQGMKN) the chain is on the cytoplasmic side. Ser930 carries the post-translational modification Phosphoserine; by PKA. The chain crosses the membrane as a helical span at residues 939-957 (KILIFGLFEETALAAFLSY). At 958 to 972 (CPGMDVALRMYPLKP) the chain is on the extracellular side. The helical transmembrane segment at 973–993 (SWWFCAFPYSFLIFVYDEIRK) threads the bilayer. At 994 to 1010 (LILRRNPGGWVEKETYY) the chain is on the cytoplasmic side.

The protein belongs to the cation transport ATPase (P-type) (TC 3.A.3) family. Type IIC subfamily. In terms of assembly, the sodium/potassium-transporting ATPase is composed of a catalytic alpha subunit, an auxiliary non-catalytic beta subunit and an additional regulatory subunit.

It localises to the cell membrane. The catalysed reaction is K(+)(out) + Na(+)(in) + ATP + H2O = K(+)(in) + Na(+)(out) + ADP + phosphate + H(+). This is the catalytic component of the active enzyme, which catalyzes the hydrolysis of ATP coupled with the exchange of sodium and potassium ions across the plasma membrane. This action creates the electrochemical gradient of sodium and potassium ions, providing the energy for active transport of various nutrients. In Gallus gallus (Chicken), this protein is Sodium/potassium-transporting ATPase subunit alpha-3 (ATP1A3).